A 127-amino-acid chain; its full sequence is Mitochondrial pyruvate carrier 2 (127 aa).

Residues 2-40 (AAAGARGLRATYHRLMDKVELLLPKKLRPLYNHPAGPRT) lie on the Mitochondrial matrix side of the membrane. Lys-26 bears the N6-acetyllysine mark. The chain crosses the membrane as a helical span at residues 41–61 (VFFWAPIMKWGLVCAGLADMA). Topologically, residues 62–72 (RPAEKLSTAQS) are mitochondrial intermembrane. Residues 73–90 (TVLMATGFIWSRYSLVII) traverse the membrane as a helical segment. Residues 91–92 (PK) are Mitochondrial matrix-facing. Residues 93-115 (NWSLFAVNFFVGSAGASQLFRIW) traverse the membrane as a helical segment. Residues 116-127 (RYNQELKSKGIQ) are Mitochondrial intermembrane-facing.

The protein belongs to the mitochondrial pyruvate carrier (MPC) (TC 2.A.105) family. As to quaternary structure, homodimer. Homooligomer. Forms heterodimers with MPC1 and MPC1L. The heterodimer is the more stable and dominant form.

The protein resides in the mitochondrion inner membrane. The catalysed reaction is pyruvate(out) + H(+)(out) = pyruvate(in) + H(+)(in). Its function is as follows. Mediates the uptake of pyruvate into mitochondria. The chain is Mitochondrial pyruvate carrier 2 (Mpc2) from Mus musculus (Mouse).